A 190-amino-acid polypeptide reads, in one-letter code: Surfactant protein C (190 aa).

Residues 1 to 24 (MDVGSKEVLMESPPDYTAVPGGRL) constitute a propeptide that is removed on maturation. Residues cysteine 28 and cysteine 29 are each lipidated (S-palmitoyl cysteine). The propeptide occupies 59-190 (HMSQKHTEMV…LCGEVPLYYT (132 aa)). Residues 94–190 (FSIGSTGTVV…LCGEVPLYYT (97 aa)) form the BRICHOS domain. Cysteine 121 and cysteine 182 are oxidised to a cystine.

Its subcellular location is the secreted. It localises to the extracellular space. It is found in the surface film. Functionally, pulmonary surfactant associated proteins promote alveolar stability by lowering the surface tension at the air-liquid interface in the peripheral air spaces. The chain is Surfactant protein C (SFTPC) from Bos taurus (Bovine).